The primary structure comprises 868 residues: E3 ubiquitin-protein ligase TRIM71 (868 aa).

The residue at position 2 (Ala-2) is an N-acetylalanine. The RING-type zinc-finger motif lies at 12 to 89 (CLLCKEMCGS…PLKLRCPVCD (78 aa)). Over residues 26 to 41 (SSNSSASSSSSQTSTS) the composition is skewed to low complexity. Disordered stretches follow at residues 26 to 50 (SSNS…GGPG) and 121 to 186 (ADEP…GSPS). Basic residues predominate over residues 142 to 153 (SNHRHHAHHAHP). Pro residues predominate over residues 159 to 176 (APPPPLPPAPPPPAPPRS). Over residues 177 to 186 (APGGPAGSPS) the composition is skewed to low complexity. The B box-type 1; atypical zinc-finger motif lies at 191-238 (RRPHGCSSCDEGNAASSRCLDCQEHLCDNCVRAHQRVRLTKDHYIERG). A B box-type 2 zinc finger spans residues 273 to 314 (ERLGFCQHHDDEVLHLYCDTCSVPICRECTVGRHGGHSFVYL). Positions 278, 281, 301, and 306 each coordinate Zn(2+). Residues 391–427 (QVKAKSLYLQVEKLRQNLNKLESTISAVQQVLEEGRA) adopt a coiled-coil conformation. A Filamin repeat occupies 479-580 (SSGAFAPLTK…IENSPFKVVV (102 aa)). 6 NHL repeats span residues 593–636 (GLSF…FKPC), 640–683 (HHKF…FTFE), 687–730 (LLKF…FGPD), 734–777 (LNKY…IHPD), 781–824 (ARFL…FESN), and 828–868 (LCKF…ILIF).

Belongs to the TRIM/RBCC family. As to quaternary structure, interacts (via NHL repeats) with AGO2; the interaction increases in presence of RNA. Interacts with HSP90AA1. Interacts (via NHL repeats) with MOV10, PABPC1, PUM1, PUM2, STAU2, XRN1 and XRN2 in an RNA-dependent manner. Interacts with SHCBP1; leading to enhance its stability. Post-translationally, autoubiquitinated.

It is found in the cytoplasm. The protein localises to the P-body. It carries out the reaction S-ubiquitinyl-[E2 ubiquitin-conjugating enzyme]-L-cysteine + [acceptor protein]-L-lysine = [E2 ubiquitin-conjugating enzyme]-L-cysteine + N(6)-ubiquitinyl-[acceptor protein]-L-lysine.. It functions in the pathway protein modification; protein ubiquitination. E3 ubiquitin-protein ligase that cooperates with the microRNAs (miRNAs) machinery and promotes embryonic stem cells proliferation and maintenance. Binds to miRNAs and associates with AGO2, participating in post-transcriptional repression of transcripts such as CDKN1A. In addition, participates in post-transcriptional mRNA repression in a miRNA independent mechanism. Facilitates the G1-S transition to promote rapid embryonic stem cell self-renewal by repressing CDKN1A expression. Required to maintain proliferation and prevent premature differentiation of neural progenitor cells during early neural development: positively regulates FGF signaling by controlling the stability of SHCBP1. Specific regulator of miRNA biogenesis. Binds to miRNA MIR29A hairpin and postranscriptionally modulates MIR29A levels, which indirectly regulates TET proteins expression. The protein is E3 ubiquitin-protein ligase TRIM71 (TRIM71) of Bos taurus (Bovine).